The following is a 2346-amino-acid chain: Highly reducing polyketide synthase claI (2346 aa).

One can recognise a Ketosynthase family 3 (KS3) domain in the interval 10–412 (TPAIAVVGMA…GTNCHLIVED (403 aa)). Catalysis depends on for beta-ketoacyl synthase activity residues Cys-183, His-295, and His-335. The malonyl-CoA:ACP transacylase (MAT) domain stretch occupies residues 530–842 (IFTGQGSQWP…EYFSALKRGE (313 aa)). Ser-622 acts as the For malonyltransferase activity in catalysis. Positions 912–1048 (HDLLGSKILG…GLIRTSEEDS (137 aa)) are N-terminal hotdog fold. A dehydratase (DH) domain region spans residues 912-1213 (HDLLGSKILG…INGLRFSSVD (302 aa)). The 307-residue stretch at 912 to 1218 (HDLLGSKILG…FSSVDLGSVQ (307 aa)) folds into the PKS/mFAS DH domain. The active-site Proton acceptor; for dehydratase activity is His-944. The segment at 1060–1218 (IHATPAQVWY…FSSVDLGSVQ (159 aa)) is C-terminal hotdog fold. Asp-1124 acts as the Proton donor; for dehydratase activity in catalysis. Residues 1633-1946 (GSLEALQWTQ…SARHIGKILI (314 aa)) form an enoyl reductase (ER) domain region. A ketoreductase (KR) domain region spans residues 1972 to 2151 (TYLIVGGLRG…HSLDLGVVDA (180 aa)). Positions 2258-2336 (SQLVEKAVTL…ALAEKMVSKV (79 aa)) constitute a Carrier domain. O-(pantetheine 4'-phosphoryl)serine is present on Ser-2296.

Pantetheine 4'-phosphate serves as cofactor.

It participates in secondary metabolite biosynthesis. Highly reducing polyketide synthase; part of the cla gene cluster that produces clavatol and ortho-quinone methide. The clavatol biosynthesis cluster cla and the terrestric acid cluster tra are both involved in the production of peniphenones and penilactones. The non-reducing PKS claF is responsible for the formation of clavatol from successive condensations of 3 malonyl-CoA units, presumably with a simple acetyl-CoA starter unit, and 2 methylation steps. The esterase claE probably collaborates with claF by catalyzing the hydrolysis of ACP-bound acyl intermediates to free the ACP from stalled intermediates. The clavatol oxidase claD then converts clavatol to hydroxyclavatol. Spontaneous dehydration of hydroxyclavatol leads to the accumulation of the highly active ortho-quinone methide. On the other hand, the PKS-NRPS hybrid traA is involved in the formation of crustosic acid, with the help of traB and traD. The polyketide synthase module (PKS) of traA is responsible for the synthesis of the polyketide backbone via the condensation of an acetyl-CoA starter unit with 3 malonyl-CoA units. The downstream nonribosomal peptide synthetase (NRPS) module then amidates the carboxyl end of the polyketide with L-malic acid. Because traA lacks a designated enoylreductase (ER) domain, the required activity is provided the enoyl reductase traG. Crustosic acid undergoes decarboxylation and isomerization to the terrestric acid, catalyzed by the 2-oxoglutarate-dependent dioxygenase traH. Both acids are further converted to the 2 gamma-butyrolactones (R)-5-methyltetronic acid and (S)-5-carboxylmethyltetronic acid, with involvement of the cytochrome P450 monooxygenase claJ. Spontaneous addition of the methide to these gamma-butyrolactones leads to peniphenone D and penilactone D, which undergo again stereospecific attacking by methide to give penilactones A and B. The function of the highly reducing polyketide synthase claI has not been investigated yet. This chain is Highly reducing polyketide synthase claI, found in Penicillium crustosum (Blue mold fungus).